The sequence spans 412 residues: Mannose-1-phosphate guanylyltransferase regulatory subunit alpha (412 aa).

A substrate-binding domain region spans residues 6-259; the sequence is TKAIILVGGP…VGFWRQIKNA (254 aa). Residues Glu88 and Gln255 each contribute to the GDP-alpha-D-mannose site. Positions 281 to 412 are hexapeptide repeat domain; sequence LKKGNNIIGN…DRNYNNEIIL (132 aa).

This sequence belongs to the transferase hexapeptide repeat family. In terms of assembly, component of the GMPPA-GMPPB mannose-1-phosphate guanylyltransferase complex composed of 4 gmppA subunits and 8 gmppB subunits; the complex is organized into three layers, a central layer made up of 2 gmppA dimers sandwiched between two layers each made up of 2 gmppB dimers.

Functionally, regulatory subunit of the GMPPA-GMPPB mannose-1-phosphate guanylyltransferase complex; reduces the catalytic activity of GMPPB when part of the complex. Mediates allosteric feedback inhibition of GMPPB catalytic activity upon binding GDP-alpha-D-mannose. Together with GMPPB regulates GDP-alpha-D-mannose levels. In Dictyostelium discoideum (Social amoeba), this protein is Mannose-1-phosphate guanylyltransferase regulatory subunit alpha (gmppA).